The primary structure comprises 174 residues: Ribosome maturation factor RimM (174 aa).

Positions 97–171 constitute a PRC barrel domain; that stretch reads EGYYYDFDII…RMVIDPIPGL (75 aa).

It belongs to the RimM family. In terms of assembly, binds ribosomal protein uS19.

It localises to the cytoplasm. In terms of biological role, an accessory protein needed during the final step in the assembly of 30S ribosomal subunit, possibly for assembly of the head region. Essential for efficient processing of 16S rRNA. May be needed both before and after RbfA during the maturation of 16S rRNA. It has affinity for free ribosomal 30S subunits but not for 70S ribosomes. The sequence is that of Ribosome maturation factor RimM from Symbiobacterium thermophilum (strain DSM 24528 / JCM 14929 / IAM 14863 / T).